Here is a 352-residue protein sequence, read N- to C-terminus: Peptide chain release factor 1 (352 aa).

Gln-233 is modified (N5-methylglutamine). The disordered stretch occupies residues 288 to 309; sequence NAKDRKEQVGSGDRSERIRTYN. Positions 289–306 are enriched in basic and acidic residues; sequence AKDRKEQVGSGDRSERIR.

The protein belongs to the prokaryotic/mitochondrial release factor family. Methylated by PrmC. Methylation increases the termination efficiency of RF1.

It localises to the cytoplasm. Its function is as follows. Peptide chain release factor 1 directs the termination of translation in response to the peptide chain termination codons UAG and UAA. This chain is Peptide chain release factor 1 (prfA), found in Helicobacter pylori (strain ATCC 700392 / 26695) (Campylobacter pylori).